The sequence spans 51 residues: Large ribosomal subunit protein bL33 (51 aa).

This sequence belongs to the bacterial ribosomal protein bL33 family.

The chain is Large ribosomal subunit protein bL33 from Pseudomonas putida (strain ATCC 47054 / DSM 6125 / CFBP 8728 / NCIMB 11950 / KT2440).